Reading from the N-terminus, the 336-residue chain is Dihydroorotate dehydrogenase (quinone) (336 aa).

Residues 62 to 66 and threonine 86 contribute to the FMN site; that span reads AGLDK. Lysine 66 serves as a coordination point for substrate. 111-115 serves as a coordination point for substrate; that stretch reads NRMGF. Positions 139 and 172 each coordinate FMN. Substrate is bound at residue asparagine 172. The active-site Nucleophile is serine 175. Asparagine 177 contacts substrate. Residues lysine 217 and threonine 245 each contribute to the FMN site. Residue 246 to 247 participates in substrate binding; sequence NT. Residues glycine 268, glycine 297, and 318-319 each bind FMN; that span reads YS.

Belongs to the dihydroorotate dehydrogenase family. Type 2 subfamily. In terms of assembly, monomer. FMN is required as a cofactor.

It is found in the cell membrane. It catalyses the reaction (S)-dihydroorotate + a quinone = orotate + a quinol. Its pathway is pyrimidine metabolism; UMP biosynthesis via de novo pathway; orotate from (S)-dihydroorotate (quinone route): step 1/1. In terms of biological role, catalyzes the conversion of dihydroorotate to orotate with quinone as electron acceptor. In Escherichia fergusonii (strain ATCC 35469 / DSM 13698 / CCUG 18766 / IAM 14443 / JCM 21226 / LMG 7866 / NBRC 102419 / NCTC 12128 / CDC 0568-73), this protein is Dihydroorotate dehydrogenase (quinone).